The chain runs to 213 residues: Thiopurine S-methyltransferase (213 aa).

S-adenosyl-L-methionine is bound by residues W10, L45, E66, and R121.

The protein belongs to the class I-like SAM-binding methyltransferase superfamily. TPMT family.

Its subcellular location is the cytoplasm. The catalysed reaction is S-adenosyl-L-methionine + a thiopurine = S-adenosyl-L-homocysteine + a thiopurine S-methylether.. This is Thiopurine S-methyltransferase from Aliivibrio fischeri (strain ATCC 700601 / ES114) (Vibrio fischeri).